Here is a 199-residue protein sequence, read N- to C-terminus: Octanoyltransferase (199 aa).

Positions 27–199 (SNSCDELWLL…FVQYFLTQFK (173 aa)) constitute a BPL/LPL catalytic domain. Residues 66–73 (RGGQVTYH), 133–135 (SIG), and 146–148 (GIA) contribute to the substrate site. Cysteine 164 serves as the catalytic Acyl-thioester intermediate.

Belongs to the LipB family.

It localises to the cytoplasm. It carries out the reaction octanoyl-[ACP] + L-lysyl-[protein] = N(6)-octanoyl-L-lysyl-[protein] + holo-[ACP] + H(+). It functions in the pathway protein modification; protein lipoylation via endogenous pathway; protein N(6)-(lipoyl)lysine from octanoyl-[acyl-carrier-protein]: step 1/2. Functionally, catalyzes the transfer of endogenously produced octanoic acid from octanoyl-acyl-carrier-protein onto the lipoyl domains of lipoate-dependent enzymes. Lipoyl-ACP can also act as a substrate although octanoyl-ACP is likely to be the physiological substrate. In Legionella pneumophila (strain Corby), this protein is Octanoyltransferase.